A 71-amino-acid chain; its full sequence is DNA gyrase inhibitor YacG (71 aa).

The Zn(2+) site is built by cysteine 9, cysteine 12, cysteine 28, and cysteine 32. Positions 43–71 (EEKRIPSQSESNDSDEWSEMPEQDPKPFN) are disordered. The segment covering 54–64 (NDSDEWSEMPE) has biased composition (acidic residues).

It belongs to the DNA gyrase inhibitor YacG family. As to quaternary structure, interacts with GyrB. Requires Zn(2+) as cofactor.

In terms of biological role, inhibits all the catalytic activities of DNA gyrase by preventing its interaction with DNA. Acts by binding directly to the C-terminal domain of GyrB, which probably disrupts DNA binding by the gyrase. This Proteus mirabilis (strain HI4320) protein is DNA gyrase inhibitor YacG.